Here is a 266-residue protein sequence, read N- to C-terminus: 4-diphosphocytidyl-2-C-methyl-D-erythritol kinase (266 aa).

Lysine 11 is a catalytic residue. Residue 103 to 113 participates in ATP binding; the sequence is PTFAGLGGGSS. Aspartate 145 is an active-site residue.

Belongs to the GHMP kinase family. IspE subfamily.

The enzyme catalyses 4-CDP-2-C-methyl-D-erythritol + ATP = 4-CDP-2-C-methyl-D-erythritol 2-phosphate + ADP + H(+). Its pathway is isoprenoid biosynthesis; isopentenyl diphosphate biosynthesis via DXP pathway; isopentenyl diphosphate from 1-deoxy-D-xylulose 5-phosphate: step 3/6. Functionally, catalyzes the phosphorylation of the position 2 hydroxy group of 4-diphosphocytidyl-2C-methyl-D-erythritol. This chain is 4-diphosphocytidyl-2-C-methyl-D-erythritol kinase, found in Sulfurimonas denitrificans (strain ATCC 33889 / DSM 1251) (Thiomicrospira denitrificans (strain ATCC 33889 / DSM 1251)).